The sequence spans 1034 residues: Potassium-transporting ATPase alpha chain 1 (1034 aa).

Residues 1 to 97 are Cytoplasmic-facing; that stretch reads MGKAENYELY…NALRPPRGTP (97 aa). Tyrosine 7 and tyrosine 10 each carry phosphotyrosine. The tract at residues 14-41 is disordered; sequence LGSGPGGDMTAKMSKKKAGGGGGKKKEK. Over residues 26–39 the composition is skewed to basic residues; the sequence is MSKKKAGGGGGKKK. Residue serine 27 is modified to Phosphoserine. A helical membrane pass occupies residues 98–118; sequence EYVKFARQLAGGLQCLMWVAA. Residues 119–141 are Lumenal-facing; sequence AICLIAFAIQASEGDLTTDDNLY. The chain crosses the membrane as a helical span at residues 142–162; the sequence is LAVALIAVVVVTGCFGYYQEF. Residues 163 to 298 lie on the Cytoplasmic side of the membrane; sequence KSTNIIASFK…NEKTPIAIEI (136 aa). The chain crosses the membrane as a helical span at residues 299 to 318; it reads EHFVDIIAGLAILFGATFFV. Residues 319-330 are Lumenal-facing; that stretch reads VAMCIGYTFLRA. The chain crosses the membrane as a helical span at residues 331–348; the sequence is MVFFMAIVVAYVPEGLLA. Residues valine 339, alanine 340, valine 342, and glutamate 344 each contribute to the K(+) site. At 349-782 the chain is on the cytoplasmic side; it reads TVTVCLSLTA…EQGRLIFDNL (434 aa). Aspartate 386 acts as the 4-aspartylphosphate intermediate in catalysis. Positions 386 and 388 each coordinate Mg(2+). 2 positions are modified to phosphoserine: serine 462 and serine 600. Mg(2+) is bound by residues aspartate 727 and aspartate 731. Residues 783-802 traverse the membrane as a helical segment; the sequence is KKSIAYTLTKNIPELTPYLI. Glutamate 796 contacts K(+). Over 803–812 the chain is Lumenal; that stretch reads YITVSVPLPL. Residues 813–833 form a helical membrane-spanning segment; it reads GCITILFIELCTDIFPSVSLA. Glutamate 821 provides a ligand contact to K(+). Residues 834 to 853 lie on the Cytoplasmic side of the membrane; that stretch reads YEKAESDIMHLRPRNPKRDR. Serine 839 is modified (phosphoserine). The chain crosses the membrane as a helical span at residues 854–876; sequence LVNEPLAAYSYFQIGAIQSFAGF. Over 877–928 the chain is Lumenal; that stretch reads ADYFTAMAQEGWFPLLCVGLRPQWEDHHLQDLQDSYGQEWTFGQRLYQQYTC. The chain crosses the membrane as a helical span at residues 929-948; it reads YTVFFISIEMCQIADVLIRK. Residues 949–962 lie on the Cytoplasmic side of the membrane; it reads TRRLSVFQQGFFRN. Serine 953 is modified (phosphoserine; by PKA). Residues 963–981 traverse the membrane as a helical segment; that stretch reads KILVIAIVFQVCIGCFLCY. Residues 982-996 are Lumenal-facing; sequence CPGMPNIFNFMPIRF. Residues 997-1017 form a helical membrane-spanning segment; sequence QWWLVPMPFGLLIFVYDEIRK. The Cytoplasmic portion of the chain corresponds to 1018-1034; it reads LGVRCCPGSWWDQELYY.

It belongs to the cation transport ATPase (P-type) (TC 3.A.3) family. Type IIC subfamily. The gastric H(+)/K(+) ATPase pump is composed of the catalytic alpha subunit ATP4A and the regulatory beta subunit ATP4B. Interacts (via the P-domain) with ATP4B (via N-terminus); this interaction stabilizes the lumenal-open E2 conformation state and prevents the reverse reaction of the transport cycle. As to expression, expressed in parietal cells (at protein level).

It localises to the apical cell membrane. The enzyme catalyses K(+)(out) + ATP + H2O + H(+)(in) = K(+)(in) + ADP + phosphate + 2 H(+)(out). The catalytic subunit of the gastric H(+)/K(+) ATPase pump which transports H(+) ions in exchange for K(+) ions across the apical membrane of parietal cells. Uses ATP as an energy source to pump H(+) ions to the gastric lumen while transporting K(+) ion from the lumen into the cell. Remarkably generates a million-fold proton gradient across the gastric parietal cell membrane, acidifying the gastric juice down to pH 1. Within a transport cycle, the transfer of a H(+) ion across the membrane is coupled to ATP hydrolysis and is associated with a transient phosphorylation that shifts the pump conformation from inward-facing (E1) to outward-facing state (E2). The release of the H(+) ion in the stomach lumen is followed by binding of K(+) ion converting the pump conformation back to the E1 state. The sequence is that of Potassium-transporting ATPase alpha chain 1 from Mus musculus (Mouse).